The sequence spans 148 residues: Ribosomal RNA large subunit methyltransferase H (148 aa).

Residues Leu-62, Gly-94, and 113–118 (LSLLTL) contribute to the S-adenosyl-L-methionine site.

The protein belongs to the RNA methyltransferase RlmH family. As to quaternary structure, homodimer.

It is found in the cytoplasm. The enzyme catalyses pseudouridine(1915) in 23S rRNA + S-adenosyl-L-methionine = N(3)-methylpseudouridine(1915) in 23S rRNA + S-adenosyl-L-homocysteine + H(+). Functionally, specifically methylates the pseudouridine at position 1915 (m3Psi1915) in 23S rRNA. This Deinococcus geothermalis (strain DSM 11300 / CIP 105573 / AG-3a) protein is Ribosomal RNA large subunit methyltransferase H.